The sequence spans 1372 residues: Putative Polyprotein CP (1372 aa).

2 coiled-coil regions span residues 126–153 (NKEN…LKNI) and 299–350 (EKQK…EELD). A disordered region spans residues 372–398 (SESSEINEISDNETEQISGSDSDYNNE). A compositionally biased stretch (polar residues) spans 386–398 (EQISGSDSDYNNE). Residues 739-756 (CKCYNCGEEGHISPNCKK) form a CCHC-type zinc finger. Positions 1162-1189 (DDRTNIQREKDQIEKADHNLELQKELNN) form a coiled coil.

It localises to the virion. This chain is Putative Polyprotein CP, found in Cassava vein mosaic virus (CsVMV).